Reading from the N-terminus, the 167-residue chain is ATP synthase subunit b (167 aa).

A helical transmembrane segment spans residues 10 to 30 (TFFFQLANTLIMFLILKHFLF).

It belongs to the ATPase B chain family. F-type ATPases have 2 components, F(1) - the catalytic core - and F(0) - the membrane proton channel. F(1) has five subunits: alpha(3), beta(3), gamma(1), delta(1), epsilon(1). F(0) has three main subunits: a(1), b(2) and c(10-14). The alpha and beta chains form an alternating ring which encloses part of the gamma chain. F(1) is attached to F(0) by a central stalk formed by the gamma and epsilon chains, while a peripheral stalk is formed by the delta and b chains.

It is found in the cell membrane. F(1)F(0) ATP synthase produces ATP from ADP in the presence of a proton or sodium gradient. F-type ATPases consist of two structural domains, F(1) containing the extramembraneous catalytic core and F(0) containing the membrane proton channel, linked together by a central stalk and a peripheral stalk. During catalysis, ATP synthesis in the catalytic domain of F(1) is coupled via a rotary mechanism of the central stalk subunits to proton translocation. In terms of biological role, component of the F(0) channel, it forms part of the peripheral stalk, linking F(1) to F(0). This is ATP synthase subunit b from Alkaliphilus oremlandii (strain OhILAs) (Clostridium oremlandii (strain OhILAs)).